A 282-amino-acid polypeptide reads, in one-letter code: 4-hydroxy-3-methylbut-2-enyl diphosphate reductase (282 aa).

Cys-12 is a binding site for [4Fe-4S] cluster. His-40 and His-72 together coordinate (2E)-4-hydroxy-3-methylbut-2-enyl diphosphate. Residues His-40 and His-72 each coordinate dimethylallyl diphosphate. Residues His-40 and His-72 each contribute to the isopentenyl diphosphate site. [4Fe-4S] cluster is bound at residue Cys-94. His-122 provides a ligand contact to (2E)-4-hydroxy-3-methylbut-2-enyl diphosphate. His-122 provides a ligand contact to dimethylallyl diphosphate. Residue His-122 participates in isopentenyl diphosphate binding. Glu-124 serves as the catalytic Proton donor. Thr-160 is a binding site for (2E)-4-hydroxy-3-methylbut-2-enyl diphosphate. Cys-188 lines the [4Fe-4S] cluster pocket. (2E)-4-hydroxy-3-methylbut-2-enyl diphosphate contacts are provided by Ser-216, Asn-218, and Ser-260. The dimethylallyl diphosphate site is built by Ser-216, Asn-218, and Ser-260. 3 residues coordinate isopentenyl diphosphate: Ser-216, Asn-218, and Ser-260.

Belongs to the IspH family. [4Fe-4S] cluster is required as a cofactor.

The catalysed reaction is isopentenyl diphosphate + 2 oxidized [2Fe-2S]-[ferredoxin] + H2O = (2E)-4-hydroxy-3-methylbut-2-enyl diphosphate + 2 reduced [2Fe-2S]-[ferredoxin] + 2 H(+). The enzyme catalyses dimethylallyl diphosphate + 2 oxidized [2Fe-2S]-[ferredoxin] + H2O = (2E)-4-hydroxy-3-methylbut-2-enyl diphosphate + 2 reduced [2Fe-2S]-[ferredoxin] + 2 H(+). The protein operates within isoprenoid biosynthesis; dimethylallyl diphosphate biosynthesis; dimethylallyl diphosphate from (2E)-4-hydroxy-3-methylbutenyl diphosphate: step 1/1. It participates in isoprenoid biosynthesis; isopentenyl diphosphate biosynthesis via DXP pathway; isopentenyl diphosphate from 1-deoxy-D-xylulose 5-phosphate: step 6/6. Catalyzes the conversion of 1-hydroxy-2-methyl-2-(E)-butenyl 4-diphosphate (HMBPP) into a mixture of isopentenyl diphosphate (IPP) and dimethylallyl diphosphate (DMAPP). Acts in the terminal step of the DOXP/MEP pathway for isoprenoid precursor biosynthesis. The polypeptide is 4-hydroxy-3-methylbut-2-enyl diphosphate reductase (Geobacter metallireducens (strain ATCC 53774 / DSM 7210 / GS-15)).